Consider the following 383-residue polypeptide: Envelope glycoprotein D (383 aa).

Residues 1–30 form the signal peptide; it reads MPAATMATPGYLACRTSVATLLFFVLLRRA. At 31–358 the chain is on the virion surface side; it reads AILGAGGAPS…PKVVGPTVGP (328 aa). 3 disulfides stabilise this stretch: C76–C197, C115–C212, and C127–C136. The tract at residues 244-311 is profusion; the sequence is YQDKLKVASP…TSASGVIEIE (68 aa). Residues 315 to 349 form a disordered region; sequence ESDVRLVSYPPPTLPSPGPGGNENGAGYSDNRPDP. Pro residues predominate over residues 323-332; that stretch reads YPPPTLPSPG. A helical membrane pass occupies residues 359 to 379; the sequence is GAIILVVMCAPILIGLTAFTI. The Intravirion portion of the chain corresponds to 380–383; sequence RKYC.

The protein belongs to the herpesviridae glycoprotein D family.

The protein resides in the virion membrane. Its function is as follows. Envelope glycoprotein that binds to host cell entry receptors, promoting the virus entry into host cells. May trigger fusion with host membrane, by recruiting the fusion machinery composed of gB and gH/gL. The sequence is that of Envelope glycoprotein D (US6) from Amazona oratrix (yellow-headed parrot).